A 468-amino-acid chain; its full sequence is Ribulose bisphosphate carboxylase large chain (468 aa).

At lysine 5 the chain carries N6,N6,N6-trimethyllysine. 2 residues coordinate substrate: asparagine 114 and threonine 164. Lysine 166 serves as the catalytic Proton acceptor. Lysine 168 lines the substrate pocket. 3 residues coordinate Mg(2+): lysine 192, aspartate 194, and glutamate 195. Lysine 192 is subject to N6-carboxylysine. The active-site Proton acceptor is histidine 285. 3 residues coordinate substrate: arginine 286, histidine 318, and serine 370.

It belongs to the RuBisCO large chain family. Type I subfamily. As to quaternary structure, heterohexadecamer of 8 large chains and 8 small chains; disulfide-linked. The disulfide link is formed within the large subunit homodimers. Mg(2+) serves as cofactor. In terms of processing, the disulfide bond which can form in the large chain dimeric partners within the hexadecamer appears to be associated with oxidative stress and protein turnover.

It is found in the plastid. Its subcellular location is the chloroplast. It catalyses the reaction 2 (2R)-3-phosphoglycerate + 2 H(+) = D-ribulose 1,5-bisphosphate + CO2 + H2O. The enzyme catalyses D-ribulose 1,5-bisphosphate + O2 = 2-phosphoglycolate + (2R)-3-phosphoglycerate + 2 H(+). In terms of biological role, ruBisCO catalyzes two reactions: the carboxylation of D-ribulose 1,5-bisphosphate, the primary event in carbon dioxide fixation, as well as the oxidative fragmentation of the pentose substrate in the photorespiration process. Both reactions occur simultaneously and in competition at the same active site. The chain is Ribulose bisphosphate carboxylase large chain from Nolana spathulata (Chilean bell flower).